The primary structure comprises 588 residues: Adenine deaminase (588 aa).

The protein belongs to the metallo-dependent hydrolases superfamily. Adenine deaminase family. Homodimer. The cofactor is Mn(2+).

It carries out the reaction adenine + H2O + H(+) = hypoxanthine + NH4(+). In Escherichia coli (strain SE11), this protein is Adenine deaminase.